We begin with the raw amino-acid sequence, 596 residues long: Pentatricopeptide repeat-containing protein At5g38730 (596 aa).

12 PPR repeats span residues 132 to 166, 167 to 201, 202 to 236, 237 to 271, 272 to 302, 306 to 340, 341 to 375, 376 to 410, 411 to 445, 446 to 480, 481 to 515, and 516 to 550; these read VSHV…GLKP, HLQA…GVVA, NIHV…GVFP, DIFT…GVAP, NIVT…IKDD, NHVT…GFSP, GVVT…KIEP, DNIT…GLKL, DMYS…GFSP, GYAT…GLCA, DVAL…GLVG, and DSVI…RLMV.

This sequence belongs to the PPR family. P subfamily.

This Arabidopsis thaliana (Mouse-ear cress) protein is Pentatricopeptide repeat-containing protein At5g38730.